A 569-amino-acid polypeptide reads, in one-letter code: Pyrophosphate--fructose 6-phosphate 1-phosphotransferase subunit beta 2 (569 aa).

Gly107 is a diphosphate binding site. Position 201 (Asp201) interacts with Mg(2+). Residues 229–231 (TID), 268–269 (KY), 276–278 (MGR), Glu337, and 442–445 (YEGR) contribute to the substrate site. Asp231 acts as the Proton acceptor in catalysis.

The protein belongs to the phosphofructokinase type A (PFKA) family. PPi-dependent PFK group II subfamily. Clade 'Long' sub-subfamily. As to quaternary structure, tetramer of two alpha (regulatory) and two beta (catalytic) chains. Mg(2+) serves as cofactor.

The protein resides in the cytoplasm. It catalyses the reaction beta-D-fructose 6-phosphate + diphosphate = beta-D-fructose 1,6-bisphosphate + phosphate + H(+). The protein operates within carbohydrate degradation; glycolysis; D-glyceraldehyde 3-phosphate and glycerone phosphate from D-glucose: step 3/4. Allosterically activated by fructose 2,6-bisphosphate. Catalytic subunit of pyrophosphate--fructose 6-phosphate 1-phosphotransferase. Catalyzes the phosphorylation of D-fructose 6-phosphate, the first committing step of glycolysis. Uses inorganic phosphate (PPi) as phosphoryl donor instead of ATP like common ATP-dependent phosphofructokinases (ATP-PFKs), which renders the reaction reversible, and can thus function both in glycolysis and gluconeogenesis. This Arabidopsis thaliana (Mouse-ear cress) protein is Pyrophosphate--fructose 6-phosphate 1-phosphotransferase subunit beta 2.